The chain runs to 105 residues: BLOC-1-related complex subunit 7 (105 aa).

Belongs to the BORCS7 family. In terms of assembly, component of the BLOC-one-related complex (BORC) which is composed of BLOC1S1, BLOC1S2, BORCS5, BORCS6, BORCS7, BORCS8, KXD1 and SNAPIN.

It is found in the lysosome membrane. As part of the BORC complex may play a role in lysosomes movement and localization at the cell periphery. Associated with the cytosolic face of lysosomes, the BORC complex may recruit ARL8B and couple lysosomes to microtubule plus-end-directed kinesin motor. The chain is BLOC-1-related complex subunit 7 from Mus musculus (Mouse).